The chain runs to 700 residues: Endoglucanase A (700 aa).

Residues 1–33 form the signal peptide; sequence MKTRQRKRLFVSAALAVSLTMTVPMPASVNAAA. E213 is a catalytic residue. The CBM3 domain maps to 550–700; sequence NSDLVVQYKD…DGQLVWGIEP (151 aa).

Belongs to the glycosyl hydrolase 44 (cellulase J) family. Post-translationally, a short form (EG-A-S) arises from post-translational proteolysis of approximately 150 AA at the C-terminus of EG-A-L.

It carries out the reaction Endohydrolysis of (1-&gt;4)-beta-D-glucosidic linkages in cellulose, lichenin and cereal beta-D-glucans.. This Paenibacillus lautus (Bacillus lautus) protein is Endoglucanase A (celA).